The chain runs to 76 residues: UPF0291 protein GWCH70_1239 (76 aa).

Positions 54–76 are disordered; sequence VIDPNGNDVTPKKLKESQKSRLH. Residues 63-76 show a composition bias toward basic and acidic residues; sequence TPKKLKESQKSRLH.

It belongs to the UPF0291 family.

The protein localises to the cytoplasm. This is UPF0291 protein GWCH70_1239 from Geobacillus sp. (strain WCH70).